We begin with the raw amino-acid sequence, 577 residues long: MFS-type transporter CPUR_05422 (577 aa).

The segment at 1–49 (MSAMSAMGKPEHGSATTSDLEHRATESSLEKQDVEAAPPGPVKPVDPSP) is disordered. Basic and acidic residues predominate over residues 19–34 (DLEHRATESSLEKQDV). Over residues 38–47 (PPGPVKPVDP) the composition is skewed to pro residues. 14 helical membrane-spanning segments follow: residues 52–72 (STLK…LVAV), 93–113 (DVGW…LLFG), 123–143 (VVLL…GAAP), 157–177 (VGSA…IPLA), 184–204 (GLMG…GGAF), 212–232 (WCFY…FFYF), 249–269 (ILSL…CLLL), 285–305 (IIVL…VQIC), 326–346 (FLTT…IPIW), 359–379 (GIQL…GGLL), 383–403 (IGYY…GAGL), 416–436 (VIGY…TPNL), 449–469 (MGIA…VAVG), and 525–545 (VFIV…CMEW). The interval 554 to 577 (PPAGPPAGAPTESAPVETKAAGHT) is disordered.

The protein belongs to the major facilitator superfamily. TCR/Tet family.

The protein resides in the membrane. Functionally, MFS-type transporter; part of the ergochrome gene cluster responsible for the typical purple-black color of the ergot sclerotia. The ergochrome gene cluster produces several ergot pigments including the yellow ergochrome secalonic acid and its derivatives, as well as the red anthraquinones endocrocin and clavorubin. In Claviceps purpurea (strain 20.1) (Ergot fungus), this protein is MFS-type transporter CPUR_05422.